The chain runs to 439 residues: Cln5-like protein 3 (439 aa).

The signal sequence occupies residues 1–24 (MKNMLNIILTLTIIFIGLIKISIS). 10 N-linked (GlcNAc...) asparagine glycosylation sites follow: asparagine 93, asparagine 112, asparagine 122, asparagine 138, asparagine 168, asparagine 219, asparagine 268, asparagine 289, asparagine 304, and asparagine 359. Residues 371 to 391 (IIFISIAIGFGVVIILYISIG) form a helical membrane-spanning segment.

This sequence belongs to the CLN5 family.

It is found in the membrane. The protein is Cln5-like protein 3 (cln5lc) of Dictyostelium discoideum (Social amoeba).